Here is a 195-residue protein sequence, read N- to C-terminus: Imidazoleglycerol-phosphate dehydratase (195 aa).

It belongs to the imidazoleglycerol-phosphate dehydratase family.

Its subcellular location is the cytoplasm. It catalyses the reaction D-erythro-1-(imidazol-4-yl)glycerol 3-phosphate = 3-(imidazol-4-yl)-2-oxopropyl phosphate + H2O. The protein operates within amino-acid biosynthesis; L-histidine biosynthesis; L-histidine from 5-phospho-alpha-D-ribose 1-diphosphate: step 6/9. The polypeptide is Imidazoleglycerol-phosphate dehydratase (Deinococcus radiodurans (strain ATCC 13939 / DSM 20539 / JCM 16871 / CCUG 27074 / LMG 4051 / NBRC 15346 / NCIMB 9279 / VKM B-1422 / R1)).